The sequence spans 4391 residues: MGWRAAGALLLALLLHGRLLAVTHGLRAYDGLSLPEDIETVTASQMRWTHSYLSDDEDMLADSISGDDLGSGDLGSGDFQMVYFRALVNFTRSIEYSPQLEDAGSREFREVSEAVVDTLESEYLKIPGDQVVSVVFIKELDGWVFVELDVGSEGNADGAQIQEMLLRVISSGSVASYVTSPQGFQFRRLGTVPQFPRACTEAEFACHSYNECVALEYRCDRRPDCRDMSDELNCEEPVLGISPTFSLLVETTSLPPRPETTIMRQPPVTHAPQPLLPGSVRPLPCGPQEAACRNGHCIPRDYLCDGQEDCEDGSDELDCGPPPPCEPNEFPCGNGHCALKLWRCDGDFDCEDRTDEANCPTKRPEEVCGPTQFRCVSTNMCIPASFHCDEESDCPDRSDEFGCMPPQVVTPPRESIQASRGQTVTFTCVAIGVPTPIINWRLNWGHIPSHPRVTVTSEGGRGTLIIRDVKESDQGAYTCEAMNARGMVFGIPDGVLELVPQRGPCPDGHFYLEHSAACLPCFCFGITSVCQSTRRFRDQIRLRFDQPDDFKGVNVTMPAQPGTPPLSSTQLQIDPSLHEFQLVDLSRRFLVHDSFWALPEQFLGNKVDSYGGSLRYNVRYELARGMLEPVQRPDVVLMGAGYRLLSRGHTPTQPGALNQRQVQFSEEHWVHESGRPVQRAELLQVLQSLEAVLIQTVYNTKMASVGLSDIAMDTTVTHATSHGRAHSVEECRCPIGYSGLSCESCDAHFTRVPGGPYLGTCSGCNCNGHASSCDPVYGHCLNCQHNTEGPQCNKCKAGFFGDAMKATATSCRPCPCPYIDASRRFSDTCFLDTDGQATCDACAPGYTGRRCESCAPGYEGNPIQPGGKCRPVNQEIVRCDERGSMGTSGEACRCKNNVVGRLCNECADGSFHLSTRNPDGCLKCFCMGVSRHCTSSSWSRAQLHGASEEPGHFSLTNAASTHTTNEGIFSPTPGELGFSSFHRLLSGPYFWSLPSRFLGDKVTSYGGELRFTVTQRSQPGSTPLHGQPLVVLQGNNIILEHHVAQEPSPGQPSTFIVPFREQAWQRPDGQPATREHLLMALAGIDTLLIRASYAQQPAESRVSGISMDVAVPEETGQDPALEVEQCSCPPGYRGPSCQDCDTGYTRTPSGLYLGTCERCSCHGHSEACEPETGACQGCQHHTEGPRCEQCQPGYYGDAQRGTPQDCQLCPCYGDPAAGQAAHTCFLDTDGHPTCDACSPGHSGRHCERCAPGYYGNPSQGQPCQRDSQVPGPIGCNCDPQGSVSSQCDAAGQCQCKAQVEGLTCSHCRPHHFHLSASNPDGCLPCFCMGITQQCASSAYTRHLISTHFAPGDFQGFALVNPQRNSRLTGEFTVEPVPEGAQLSFGNFAQLGHESFYWQLPETYQGDKVAAYGGKLRYTLSYTAGPQGSPLSDPDVQITGNNIMLVASQPALQGPERRSYEIMFREEFWRRPDGQPATREHLLMALADLDELLIRATFSSVPLAASISAVSLEVAQPGPSNRPRALEVEECRCPPGYIGLSCQDCAPGYTRTGSGLYLGHCELCECNGHSDLCHPETGACSQCQHNAAGEFCELCAPGYYGDATAGTPEDCQPCACPLTNPENMFSRTCESLGAGGYRCTACEPGYTGQYCEQCGPGYVGNPSVQGGQCLPETNQAPLVVEVHPARSIVPQGGSHSLRCQVSGSPPHYFYWSREDGRPVPSGTQQRHQGSELHFPSVQPSDAGVYICTCRNLHQSNTSRAELLVTEAPSKPITVTVEEQRSQSVRPGADVTFICTAKSKSPAYTLVWTRLHNGKLPTRAMDFNGILTIRNVQLSDAGTYVCTGSNMFAMDQGTATLHVQASGTLSAPVVSIHPPQLTVQPGQLAEFRCSATGSPTPTLEWTGGPGGQLPAKAQIHGGILRLPAVEPTDQAQYLCRAHSSAGQQVARAVLHVHGGGGPRVQVSPERTQVHAGRTVRLYCRAAGVPSATITWRKEGGSLPPQARSERTDIATLLIPAITTADAGFYLCVATSPAGTAQARIQVVVLSASDASPPPVKIESSSPSVTEGQTLDLNCVVAGSAHAQVTWYRRGGSLPPHTQVHGSRLRLPQVSPADSGEYVCRVENGSGPKEASITVSVLHGTHSGPSYTPVPGSTRPIRIEPSSSHVAEGQTLDLNCVVPGQAHAQVTWHKRGGSLPARHQTHGSLLRLHQVTPADSGEYVCHVVGTSGPLEASVLVTIEASVIPGPIPPVRIESSSSTVAEGQTLDLSCVVAGQAHAQVTWYKRGGSLPARHQVRGSRLYIFQASPADAGQYVCRASNGMEASITVTVTGTQGANLAYPAGSTQPIRIEPSSSQVAEGQTLDLNCVVPGQSHAQVTWHKRGGSLPVRHQTHGSLLRLYQASPADSGEYVCRVLGSSVPLEASVLVTIEPAGSVPALGVTPTVRIESSSSQVAEGQTLDLNCLVAGQAHAQVTWHKRGGSLPARHQVHGSRLRLLQVTPADSGEYVCRVVGSSGTQEASVLVTIQQRLSGSHSQGVAYPVRIESSSASLANGHTLDLNCLVASQAPHTITWYKRGGSLPSRHQIVGSRLRIPQVTPADSGEYVCHVSNGAGSRETSLIVTIQGSGSSHVPSVSPPIRIESSSPTVVEGQTLDLNCVVARQPQAIITWYKRGGSLPSRHQTHGSHLRLHQMSVADSGEYVCRANNNIDALEASIVISVSPSAGSPSAPGSSMPIRIESSSSHVAEGETLDLNCVVPGQAHAQVTWHKRGGSLPSHHQTRGSRLRLHHVSPADSGEYVCRVMGSSGPLEASVLVTIEASGSSAVHVPAPGGAPPIRIEPSSSRVAEGQTLDLKCVVPGQAHAQVTWHKRGGNLPARHQVHGPLLRLNQVSPADSGEYSCQVTGSSGTLEASVLVTIEPSSPGPIPAPGLAQPIYIEASSSHVTEGQTLDLNCVVPGQAHAQVTWYKRGGSLPARHQTHGSQLRLHLVSPADSGEYVCRAASGPGPEQEASFTVTVPPSEGSSYRLRSPVISIDPPSSTVQQGQDASFKCLIHDGAAPISLEWKTRNQELEDNVHISPNGSIITIVGTRPSNHGTYRCVASNAYGVAQSVVNLSVHGPPTVSVLPEGPVWVKVGKAVTLECVSAGEPRSSARWTRISSTPAKLEQRTYGLMDSHAVLQISSAKPSDAGTYVCLAQNALGTAQKQVEVIVDTGAMAPGAPQVQAEEAELTVEAGHTATLRCSATGSPAPTIHWSKLRSPLPWQHRLEGDTLIIPRVAQQDSGQYICNATSPAGHAEATIILHVESPPYATTVPEHASVQAGETVQLQCLAHGTPPLTFQWSRVGSSLPGRATARNELLHFERAAPEDSGRYRCRVTNKVGSAEAFAQLLVQGPPGSLPATSIPAGSTPTVQVTPQLETKSIGASVEFHCAVPSDRGTQLRWFKEGGQLPPGHSVQDGVLRIQNLDQSCQGTYICQAHGPWGKAQASAQLVIQALPSVLINIRTSVQTVVVGHAVEFECLALGDPKPQVTWSKVGGHLRPGIVQSGGVVRIAHVELADAGQYRCTATNAAGTTQSHVLLLVQALPQISMPQEVRVPAGSAAVFPCIASGYPTPDISWSKLDGSLPPDSRLENNMLMLPSVRPQDAGTYVCTATNRQGKVKAFAHLQVPERVVPYFTQTPYSFLPLPTIKDAYRKFEIKITFRPDSADGMLLYNGQKRVPGSPTNLANRQPDFISFGLVGGRPEFRFDAGSGMATIRHPTPLALGHFHTVTLLRSLTQGSLIVGDLAPVNGTSQGKFQGLDLNEELYLGGYPDYGAIPKAGLSSGFIGCVRELRIQGEEIVFHDLNLTAHGISHCPTCRDRPCQNGGQCHDSESSSYVCVCPAGFTGSRCEHSQALHCHPEACGPDATCVNRPDGRGYTCRCHLGRSGLRCEEGVTVTTPSLSGAGSYLALPALTNTHHELRLDVEFKPLAPDGVLLFSGGKSGPVEDFVSLAMVGGHLEFRYELGSGLAVLRSAEPLALGRWHRVSAERLNKDGSLRVNGGRPVLRSSPGKSQGLNLHTLLYLGGVEPSVPLSPATNMSAHFRGCVGEVSVNGKRLDLTYSFLGSQGIGQCYDSSPCERQPCQHGATCMPAGEYEFQCLCRDGFKGDLCEHEENPCQLREPCLHGGTCQGTRCLCLPGFSGPRCQQGSGHGIAESDWHLEGSGGNDAPGQYGAYFHDDGFLAFPGHVFSRSLPEVPETIELEVRTSTASGLLLWQGVEVGEAGQGKDFISLGLQDGHLVFRYQLGSGEARLVSEDPINDGEWHRVTALREGRRGSIQVDGEELVSGRSPGPNVAVNAKGSVYIGGAPDVATLTGGRFSSGITGCVKNLVLHSARPGAPPPQPLDLQHRAQAGANTRPCPS.

An N-terminal signal peptide occupies residues 1-21 (MGWRAAGALLLALLLHGRLLA). Threonine 42 is a glycosylation site (O-linked (GalNAc...) threonine). Serine 65, serine 71, and serine 76 each carry an O-linked (Xyl...) (heparan sulfate) serine glycan. In terms of domain architecture, SEA spans 80–191 (QMVYFRALVN…QGFQFRRLGT (112 aa)). Asparagine 89 carries an N-linked (GlcNAc...) asparagine glycan. LDL-receptor class A domains lie at 198–235 (ACTE…LNCE), 284–320 (PCGP…LDCG), 324–360 (PCEP…ANCP), and 367–404 (VCGP…FGCM). 12 disulfides stabilise this stretch: cysteine 199–cysteine 212, cysteine 206–cysteine 225, cysteine 219–cysteine 234, cysteine 285–cysteine 297, cysteine 292–cysteine 310, cysteine 304–cysteine 319, cysteine 325–cysteine 337, cysteine 332–cysteine 350, cysteine 344–cysteine 359, cysteine 368–cysteine 381, cysteine 375–cysteine 394, and cysteine 388–cysteine 403. The Ig-like C2-type 1 domain maps to 405–504 (PPQVVTPPRE…VLELVPQRGP (100 aa)). One can recognise a Laminin EGF-like 1; first part domain in the interval 521–530 (CFCFGITSVC). The Laminin IV type A 1 domain maps to 538 to 730 (DQIRLRFDQP…SHGRAHSVEE (193 aa)). The N-linked (GlcNAc...) asparagine glycan is linked to asparagine 554. Residues 731–763 (CRCPIGYSGLSCESCDAHFTRVPGGPYLGTCSG) form the Laminin EGF-like 1; second part domain. 11 cysteine pairs are disulfide-bonded: cysteine 764–cysteine 773, cysteine 766–cysteine 780, cysteine 783–cysteine 792, cysteine 795–cysteine 811, cysteine 814–cysteine 829, cysteine 816–cysteine 839, cysteine 842–cysteine 851, cysteine 854–cysteine 869, cysteine 879–cysteine 892, cysteine 894–cysteine 903, and cysteine 906–cysteine 921. Laminin EGF-like domains are found at residues 764-813 (CNCN…SCRP) and 814-871 (CPCP…KCRP). The Laminin EGF-like 4; truncated domain maps to 879–923 (CDERGSMGTSGEACRCKNNVVGRLCNECADGSFHLSTRNPDGCLK). One can recognise a Laminin EGF-like 5; first part domain in the interval 924-933 (CFCMGVSRHC). Positions 941-1125 (AQLHGASEEP…GQDPALEVEQ (185 aa)) constitute a Laminin IV type A 2 domain. In terms of domain architecture, Laminin EGF-like 5; second part spans 1126–1158 (CSCPPGYRGPSCQDCDTGYTRTPSGLYLGTCER). Intrachain disulfides connect cysteine 1159–cysteine 1168, cysteine 1161–cysteine 1175, cysteine 1178–cysteine 1187, cysteine 1190–cysteine 1206, cysteine 1209–cysteine 1224, cysteine 1211–cysteine 1234, cysteine 1237–cysteine 1246, cysteine 1249–cysteine 1263, cysteine 1275–cysteine 1287, cysteine 1277–cysteine 1293, cysteine 1295–cysteine 1304, and cysteine 1307–cysteine 1322. Laminin EGF-like domains follow at residues 1159–1208 (CSCH…DCQL), 1209–1265 (CPCY…PCQR), and 1275–1324 (CNCD…GCLP). Residues 1325 to 1334 (CFCMGITQQC) enclose the Laminin EGF-like 9; first part domain. Residues 1344–1529 (ISTHFAPGDF…NRPRALEVEE (186 aa)) enclose the Laminin IV type A 3 domain. The Laminin EGF-like 9; second part domain occupies 1530–1562 (CRCPPGYIGLSCQDCAPGYTRTGSGLYLGHCEL). Cystine bridges form between cysteine 1563–cysteine 1572, cysteine 1565–cysteine 1579, cysteine 1582–cysteine 1591, cysteine 1594–cysteine 1610, cysteine 1613–cysteine 1628, cysteine 1615–cysteine 1638, cysteine 1641–cysteine 1650, and cysteine 1653–cysteine 1668. 2 Laminin EGF-like domains span residues 1563-1612 (CECN…DCQP) and 1613-1670 (CACP…QCLP). Ig-like C2-type domains lie at 1677–1771 (LVVE…SKPI), 1772–1865 (TVTV…TLSA), 1866–1955 (PVVS…GGGG), 1956–2051 (PRVQ…ASPP), 2052–2151 (PVKI…PGST), 2152–2244 (RPIR…PGPI), 2245–2340 (PPVR…AGST), 2341–2436 (QPIR…LGVT), 2437–2533 (PTVR…QGVA), 2534–2629 (YPVR…PSVS), 2630–2726 (PPIR…PGSS), 2727–2826 (MPIR…PGGA), 2827–2924 (PPIR…PGLA), 2925–3021 (QPIY…RLRS), 3022–3112 (PVIS…HGPP), 3113–3211 (TVSV…APGA), 3212–3298 (PQVQ…VESP), 3299–3399 (PYAT…AGST), 3400–3488 (PTVQ…ALPS), 3489–3574 (VLIN…LVQA), and 3575–3662 (LPQI…PERV). N-linked (GlcNAc...) asparagine glycosylation occurs at asparagine 1755. Residue asparagine 2121 is glycosylated (N-linked (GlcNAc...) asparagine). The disordered stretch occupies residues 2994 to 3014 (ASGPGPEQEASFTVTVPPSEG). Serine 2995 carries O-linked (Xyl...) (chondroitin sulfate) serine glycosylation. Positions 3003-3014 (ASFTVTVPPSEG) are enriched in polar residues. Asparagine 3072 and asparagine 3105 each carry an N-linked (GlcNAc...) asparagine glycan. Asparagine 3279 carries an N-linked (GlcNAc...) asparagine glycan. One can recognise a Laminin G-like 1 domain in the interval 3663–3843 (VPYFTQTPYS…DLNLTAHGIS (181 aa)). Residues asparagine 3780 and asparagine 3836 are each glycosylated (N-linked (GlcNAc...) asparagine). 7 cysteine pairs are disulfide-bonded: cysteine 3819-cysteine 3845, cysteine 3848-cysteine 3859, cysteine 3853-cysteine 3869, cysteine 3871-cysteine 3880, cysteine 3888-cysteine 3899, cysteine 3893-cysteine 3910, and cysteine 3912-cysteine 3921. EGF-like domains follow at residues 3844 to 3881 (HCPT…SRCE) and 3884 to 3922 (QALH…LRCE). Residues 3928-4103 (TTPSLSGAGS…LGSQGIGQCY (176 aa)) enclose the Laminin G-like 2 domain. O-linked (Xyl...) (chondroitin sulfate) serine glycosylation occurs at serine 3933. Asparagine 4068 is a glycosylation site (N-linked (GlcNAc...) asparagine). Intrachain disulfides connect cysteine 4076/cysteine 4102, cysteine 4108/cysteine 4119, cysteine 4113/cysteine 4129, cysteine 4131/cysteine 4140, cysteine 4147/cysteine 4159, cysteine 4153/cysteine 4164, and cysteine 4166/cysteine 4175. EGF-like domains lie at 4104–4141 (DSSP…DLCE) and 4143–4176 (EENP…PRCQ). The tract at residues 4149–4151 (LRE) is mediates motor neuron attachment. O-linked (Xyl...) (chondroitin sulfate) serine glycosylation is found at serine 4179 and serine 4193. Residues 4201–4389 (QYGAYFHDDG…AQAGANTRPC (189 aa)) form the Laminin G-like 3 domain. Residues aspartate 4258 and leucine 4275 each contribute to the Ca(2+) site. The mediates motor neuron attachment stretch occupies residues 4299–4301 (LRE). Ca(2+)-binding residues include alanine 4325 and asparagine 4327. Cysteine 4355 and cysteine 4389 are oxidised to a cystine. The disordered stretch occupies residues 4364–4391 (ARPGAPPPQPLDLQHRAQAGANTRPCPS).

In terms of assembly, has a strong tendency to aggregate in dimers or stellate structures. Interacts with other basement membrane components such as laminin, prolargin and collagen type IV. Interacts with COL13A1. Interacts with FGFBP1. Interacts with VWA1. Interacts (via C-terminus) with ECM1 (via C-terminus). Interacts with SVEP1. Post-translationally, proteolytic processing produces the C-terminal angiogenic peptide, endorepellin. This peptide can be further processed to produce the LG3 peptide. O-glycosylated with core 1 or possibly core 8 glycans. Contains three heparan sulfate chains. Also contains chondroitin sulfate. Detected in cerebrospinal fluid, fibroblasts and urine (at protein level).

Its subcellular location is the secreted. The protein resides in the extracellular space. The protein localises to the extracellular matrix. It localises to the basement membrane. In terms of biological role, integral component of basement membranes. Component of the glomerular basement membrane (GBM), responsible for the fixed negative electrostatic membrane charge, and which provides a barrier which is both size- and charge-selective. It serves as an attachment substrate for cells. Plays essential roles in vascularization. Critical for normal heart development and for regulating the vascular response to injury. Also required for avascular cartilage development. Anti-angiogenic and anti-tumor peptide that inhibits endothelial cell migration, collagen-induced endothelial tube morphogenesis and blood vessel growth in the chorioallantoic membrane. Blocks endothelial cell adhesion to fibronectin and type I collagen. Anti-tumor agent in neovascularization. Interaction with its ligand, integrin alpha2/beta1, is required for the anti-angiogenic properties. Evokes a reduction in phosphorylation of receptor tyrosine kinases via alpha2/beta1 integrin-mediated activation of the tyrosine phosphatase, PTPN6. Its function is as follows. Has anti-angiogenic properties that require binding of calcium ions for full activity. This Homo sapiens (Human) protein is Basement membrane-specific heparan sulfate proteoglycan core protein (HSPG2).